Consider the following 124-residue polypeptide: uncharacterized protein (124 aa).

Helical transmembrane passes span 13–33 (LIQI…VLQL), 43–63 (GLFW…PEFF), and 71–91 (GVGR…FYLI).

To M.thermoautotrophicum MTH137.

It localises to the cell membrane. This is an uncharacterized protein from Methanocaldococcus jannaschii (strain ATCC 43067 / DSM 2661 / JAL-1 / JCM 10045 / NBRC 100440) (Methanococcus jannaschii).